Reading from the N-terminus, the 1263-residue chain is DNA topoisomerase 2 (1263 aa).

Residues Asn80, Asn109, 137-139 (STN), and 150-157 (GKNGFGAK) each bind ATP. Residues 329–331 (VKK) are interaction with DNA. 362–364 (QTK) is an ATP binding site. The 115-residue stretch at 439–553 (CTLILTEGDS…SLVKYEGFIQ (115 aa)) folds into the Toprim domain. Mg(2+)-binding residues include Glu445, Asp522, and Asp524. The region spanning 737–1223 (VPNLMDGFKP…SPEEIWEEEL (487 aa)) is the Topo IIA-type catalytic domain. Catalysis depends on Tyr828, which acts as the O-(5'-phospho-DNA)-tyrosine intermediate. Residues 977–1015 (KKASKAVSSAKNTKTTTKAGSKTGSRTRKNPALAKKSQK) form a disordered region. Residues 981 to 1000 (KAVSSAKNTKTTTKAGSKTG) are compositionally biased toward low complexity. The interval 1068 to 1077 (KLVKPLNLTN) is interaction with DNA. Residues 1244-1263 (LLNKKKGSTGKKSRKTSTQK) are disordered. A compositionally biased stretch (basic residues) spans 1247–1263 (KKKGSTGKKSRKTSTQK).

It belongs to the type II topoisomerase family. The cofactor is Mg(2+). Mn(2+) is required as a cofactor. It depends on Ca(2+) as a cofactor.

The catalysed reaction is ATP-dependent breakage, passage and rejoining of double-stranded DNA.. Its function is as follows. Can introduce negative superhelical turns into double-stranded circular DNA. In Acanthamoeba polyphaga (Amoeba), this protein is DNA topoisomerase 2 (TOP2).